The following is a 490-amino-acid chain: Doublesex- and mab-3-related transcription factor A1 (490 aa).

Positions 1 to 13 (MERLPHGRRDRSG) are enriched in basic and acidic residues. The tract at residues 1-31 (MERLPHGRRDRSGGCRPHLAPGRAAAPASAA) is disordered. Positions 20–31 (APGRAAAPASAA) are enriched in low complexity. Positions 86–133 (CARCRNHGVVSALKGHKRFCRWRDCACAKCTLIAERQRVMAAQVALRR) form a DNA-binding region, DM. 2 disordered regions span residues 152-171 (GSSG…ESPQ) and 207-289 (DRKQ…DLES). The span at 207–216 (DRKQEPKQRN) shows a compositional bias: basic and acidic residues. Composition is skewed to polar residues over residues 217–242 (CESC…SKGN) and 269–289 (PTDQ…DLES). A DMA domain is found at 314–349 (RDPLGILTRIFPGYKHSRLEGILQFCKGDVVQAIEQ).

It belongs to the DMRT family. As to expression, widely expressed, with highest levels in ovary, testis, epididymis, preputial gland, vomeronasal organ, liver, salivary glands and heart. Also expressed throughout the brain with highest levels in the olfactory bulbs and medulla. Detected at similar levels in gonads of both sexes.

It is found in the nucleus. In Mus musculus (Mouse), this protein is Doublesex- and mab-3-related transcription factor A1 (Dmrta1).